The primary structure comprises 338 residues: Phenylalanine--tRNA ligase alpha subunit (338 aa).

Mg(2+) is bound at residue Glu259.

The protein belongs to the class-II aminoacyl-tRNA synthetase family. Phe-tRNA synthetase alpha subunit type 1 subfamily. Tetramer of two alpha and two beta subunits. Mg(2+) serves as cofactor.

Its subcellular location is the cytoplasm. It catalyses the reaction tRNA(Phe) + L-phenylalanine + ATP = L-phenylalanyl-tRNA(Phe) + AMP + diphosphate + H(+). The protein is Phenylalanine--tRNA ligase alpha subunit of Herminiimonas arsenicoxydans.